The chain runs to 361 residues: GTP 3',8-cyclase (361 aa).

The interval 1–30 is disordered; the sequence is MTVTALGLPTVARSTGDGSAGASPAPADGP. Over residues 16–30 the composition is skewed to low complexity; that stretch reads GDGSAGASPAPADGP. A Radical SAM core domain is found at 34-252; it reads TYGRAATDLR…LQQHFELTPD (219 aa). R43 provides a ligand contact to GTP. 2 residues coordinate [4Fe-4S] cluster: C50 and C54. Y56 contacts S-adenosyl-L-methionine. C57 serves as a coordination point for [4Fe-4S] cluster. Residue R94 participates in GTP binding. G98 contacts S-adenosyl-L-methionine. A GTP-binding site is contributed by T125. S149 contributes to the S-adenosyl-L-methionine binding site. A GTP-binding site is contributed by K186. Residue M220 participates in S-adenosyl-L-methionine binding. [4Fe-4S] cluster is bound by residues C288 and C291. 293–295 provides a ligand contact to GTP; that stretch reads RTR. Position 305 (C305) interacts with [4Fe-4S] cluster.

This sequence belongs to the radical SAM superfamily. MoaA family. In terms of assembly, monomer and homodimer. It depends on [4Fe-4S] cluster as a cofactor.

The catalysed reaction is GTP + AH2 + S-adenosyl-L-methionine = (8S)-3',8-cyclo-7,8-dihydroguanosine 5'-triphosphate + 5'-deoxyadenosine + L-methionine + A + H(+). It functions in the pathway cofactor biosynthesis; molybdopterin biosynthesis. Functionally, catalyzes the cyclization of GTP to (8S)-3',8-cyclo-7,8-dihydroguanosine 5'-triphosphate. The polypeptide is GTP 3',8-cyclase (Mycolicibacterium smegmatis (strain ATCC 700084 / mc(2)155) (Mycobacterium smegmatis)).